The chain runs to 607 residues: BTB/POZ domain-containing protein DOT3 (607 aa).

The BTB domain maps to 52–121; that stretch reads TDLSIQVNDI…CYNLPLDLNP (70 aa). Residues 211–487 enclose the NPH3 domain; it reads RCLYNDIATL…VQINTQVLFS (277 aa). Y428 is subject to Phosphotyrosine. Disordered stretches follow at residues 498-520 and 573-607; these read DKLP…SRDN and KSFQ…MSMS. Composition is skewed to basic and acidic residues over residues 499–520 and 577–586; these read KLPE…SRDN and TKREDEETRE. Residues 511–563 adopt a coiled-coil conformation; sequence REDKRMSRDNEIIKTLKEELENVKKKMSELQSDYNELQQEYERLSSKQKSSHN.

The protein belongs to the NPH3 family. Expressed in emerging leaf primordia.

It functions in the pathway protein modification; protein ubiquitination. Its function is as follows. May act as a substrate-specific adapter of an E3 ubiquitin-protein ligase complex (CUL3-RBX1-BTB) which mediates the ubiquitination and subsequent proteasomal degradation of target proteins. Involved in leaf vasculature patterning. This is BTB/POZ domain-containing protein DOT3 from Arabidopsis thaliana (Mouse-ear cress).